A 79-amino-acid chain; its full sequence is Tungsten-containing formylmethanofuran dehydrogenase 2 subunit G (79 aa).

4Fe-4S ferredoxin-type domains lie at 2 to 31 (VKIV…SPNV) and 51 to 79 (TVSV…EIKT). Residues cysteine 11, cysteine 14, cysteine 17, cysteine 21, cysteine 60, cysteine 63, cysteine 66, and cysteine 70 each contribute to the [4Fe-4S] cluster site.

It depends on [4Fe-4S] cluster as a cofactor.

It carries out the reaction N-formylmethanofuran + 2 oxidized [2Fe-2S]-[ferredoxin] + H2O = methanofuran + 2 reduced [2Fe-2S]-[ferredoxin] + CO2 + H(+). The protein operates within one-carbon metabolism; methanogenesis from CO(2); 5,10-methenyl-5,6,7,8-tetrahydromethanopterin from CO(2): step 1/3. Not inactivated by cyanide. Functionally, catalyzes the reversible oxidation of CO(2) and methanofuran (MFR) to N-formylmethanofuran (CHO-MFR). This enzyme is oxygen-labile. May function as an electron transfer protein. In Methanopyrus kandleri (strain AV19 / DSM 6324 / JCM 9639 / NBRC 100938), this protein is Tungsten-containing formylmethanofuran dehydrogenase 2 subunit G (fwdG).